The following is a 178-amino-acid chain: Fluoride-specific ion channel FluC 2 (178 aa).

The next 4 membrane-spanning stretches (helical) occupy residues 25-45 (PDIHLDIVLVVFCGGAIGTAI), 63-83 (FVANMLACFCYAGLTAYLAGA), 97-117 (GLGMGVCGGLSTMSTLALEGF), and 129-149 (IAYLLVTFALGLVCASAGVWA). Na(+) is bound by residues glycine 104 and serine 107.

The protein belongs to the fluoride channel Fluc/FEX (TC 1.A.43) family.

It localises to the cell membrane. It carries out the reaction fluoride(in) = fluoride(out). Na(+) is not transported, but it plays an essential structural role and its presence is essential for fluoride channel function. In terms of biological role, fluoride-specific ion channel. Important for reducing fluoride concentration in the cell, thus reducing its toxicity. This chain is Fluoride-specific ion channel FluC 2, found in Bifidobacterium longum (strain NCC 2705).